A 600-amino-acid polypeptide reads, in one-letter code: Probable translation initiation factor IF-2 (600 aa).

Residues 10-227 (LRQPIVVVLG…LLAGLTQRYL (218 aa)) enclose the tr-type G domain. The segment at 19-26 (GHVDHGKT) is G1. A GTP-binding site is contributed by 19–26 (GHVDHGKT). Positions 44–48 (EMTQE) are G2. The segment at 83–86 (DTPG) is G3. GTP-binding positions include 83–87 (DTPGH) and 137–140 (NKID). Residues 137–140 (NKID) form a G4 region. The G5 stretch occupies residues 205-207 (SAK).

It belongs to the TRAFAC class translation factor GTPase superfamily. Classic translation factor GTPase family. IF-2 subfamily.

Its function is as follows. Function in general translation initiation by promoting the binding of the formylmethionine-tRNA to ribosomes. Seems to function along with eIF-2. The sequence is that of Probable translation initiation factor IF-2 from Saccharolobus solfataricus (strain ATCC 35092 / DSM 1617 / JCM 11322 / P2) (Sulfolobus solfataricus).